The chain runs to 539 residues: Chaperonin GroEL 1 (539 aa).

ATP is bound by residues T29–P32, D86–T90, G413, N478–A480, and D494. Positions I520–H539 are disordered. The segment covering K523–G533 has biased composition (basic and acidic residues).

Belongs to the chaperonin (HSP60) family. In terms of assembly, forms a cylinder of 14 subunits composed of two heptameric rings stacked back-to-back. Interacts with the co-chaperonin GroES.

It is found in the cytoplasm. The enzyme catalyses ATP + H2O + a folded polypeptide = ADP + phosphate + an unfolded polypeptide.. Its function is as follows. Together with its co-chaperonin GroES, plays an essential role in assisting protein folding. The GroEL-GroES system forms a nano-cage that allows encapsulation of the non-native substrate proteins and provides a physical environment optimized to promote and accelerate protein folding. In Mycobacterium ulcerans (strain Agy99), this protein is Chaperonin GroEL 1.